The sequence spans 343 residues: 4-hydroxyproline 2-epimerase 1 (343 aa).

Catalysis depends on serine 90, which acts as the Proton acceptor. Substrate contacts are provided by residues 91 to 92 (GS), aspartate 251, and 256 to 257 (GT).

The protein belongs to the proline racemase family.

It carries out the reaction trans-4-hydroxy-L-proline = cis-4-hydroxy-D-proline. Functionally, catalyzes the epimerization of trans-4-hydroxy-L-proline (t4LHyp) to cis-4-hydroxy-D-proline (c4DHyp) in vitro, albeit with low efficiency. The physiological substrate may be different. Displays no proline racemase activity. The polypeptide is 4-hydroxyproline 2-epimerase 1 (Brucella anthropi (strain ATCC 49188 / DSM 6882 / CCUG 24695 / JCM 21032 / LMG 3331 / NBRC 15819 / NCTC 12168 / Alc 37) (Ochrobactrum anthropi)).